A 326-amino-acid chain; its full sequence is Probable cell division protein WhiA (326 aa).

The segment at residues 275 to 308 is a DNA-binding region (H-T-H motif); the sequence is SLDELGHYADPPMTKDAVAGRIRRLLAMADKRAS.

The protein belongs to the WhiA family.

Functionally, involved in cell division and chromosome segregation. This chain is Probable cell division protein WhiA, found in Leifsonia xyli subsp. xyli (strain CTCB07).